Here is a 646-residue protein sequence, read N- to C-terminus: Cytochrome b translation regulator cbp8 (646 aa).

In terms of assembly, component of a complex, at least composed of cbp7 and cbp8.

It localises to the mitochondrion. Functionally, translation factor for cob1/cytochrome b; plays a role in cob1 mRNA stabilization and required for correct folding of the protein. The protein is Cytochrome b translation regulator cbp8 of Schizosaccharomyces pombe (strain 972 / ATCC 24843) (Fission yeast).